The sequence spans 271 residues: Formamidopyrimidine-DNA glycosylase (271 aa).

The active-site Schiff-base intermediate with DNA is P2. Residue E3 is the Proton donor of the active site. K57 functions as the Proton donor; for beta-elimination activity in the catalytic mechanism. Residues H90, R109, and K151 each contribute to the DNA site. The FPG-type zinc-finger motif lies at 236–270 (HVYGRGGETCTQCGNLLSEIKLGQRATVFCGLCQP). R260 functions as the Proton donor; for delta-elimination activity in the catalytic mechanism.

This sequence belongs to the FPG family. Monomer. Zn(2+) serves as cofactor.

The catalysed reaction is Hydrolysis of DNA containing ring-opened 7-methylguanine residues, releasing 2,6-diamino-4-hydroxy-5-(N-methyl)formamidopyrimidine.. The enzyme catalyses 2'-deoxyribonucleotide-(2'-deoxyribose 5'-phosphate)-2'-deoxyribonucleotide-DNA = a 3'-end 2'-deoxyribonucleotide-(2,3-dehydro-2,3-deoxyribose 5'-phosphate)-DNA + a 5'-end 5'-phospho-2'-deoxyribonucleoside-DNA + H(+). Functionally, involved in base excision repair of DNA damaged by oxidation or by mutagenic agents. Acts as a DNA glycosylase that recognizes and removes damaged bases. Has a preference for oxidized purines, such as 7,8-dihydro-8-oxoguanine (8-oxoG). Has AP (apurinic/apyrimidinic) lyase activity and introduces nicks in the DNA strand. Cleaves the DNA backbone by beta-delta elimination to generate a single-strand break at the site of the removed base with both 3'- and 5'-phosphates. The polypeptide is Formamidopyrimidine-DNA glycosylase (Shewanella loihica (strain ATCC BAA-1088 / PV-4)).